The sequence spans 201 residues: 3-isopropylmalate dehydratase small subunit (201 aa).

Belongs to the LeuD family. LeuD type 1 subfamily. As to quaternary structure, heterodimer of LeuC and LeuD.

The enzyme catalyses (2R,3S)-3-isopropylmalate = (2S)-2-isopropylmalate. Its pathway is amino-acid biosynthesis; L-leucine biosynthesis; L-leucine from 3-methyl-2-oxobutanoate: step 2/4. In terms of biological role, catalyzes the isomerization between 2-isopropylmalate and 3-isopropylmalate, via the formation of 2-isopropylmaleate. In Roseobacter denitrificans (strain ATCC 33942 / OCh 114) (Erythrobacter sp. (strain OCh 114)), this protein is 3-isopropylmalate dehydratase small subunit.